A 54-amino-acid polypeptide reads, in one-letter code: Large ribosomal subunit protein bL33 (54 aa).

The protein belongs to the bacterial ribosomal protein bL33 family.

The polypeptide is Large ribosomal subunit protein bL33 (Frankia alni (strain DSM 45986 / CECT 9034 / ACN14a)).